We begin with the raw amino-acid sequence, 260 residues long: MADSSREENVYLAKLAEQAERYEEMIEFMEKVAKTADVEELTVEERNLLSVAYKNVIGARRASWRIISSIEQKEESRGNEDHVNTIKEYRSKIEADLSKICDGILSLLESNLIPSASTAESKVFHLKMKGDYHRYLAEFKTGTERKEAAENTLLAYKSAQDIALAELAPTHPIRLGLALNFSVFYYEILNSPDRACNLAKQAFDEAISELDTLGEESYKDSTLIMQLLRDNLTLWTSDNADDVGDDIKEASKPESGEGQQ.

The disordered stretch occupies residues 238–260 (DNADDVGDDIKEASKPESGEGQQ). Basic and acidic residues predominate over residues 245–260 (DDIKEASKPESGEGQQ).

The protein belongs to the 14-3-3 family. Homodimer.

This chain is 14-3-3 protein 4 (TFT4), found in Solanum lycopersicum (Tomato).